We begin with the raw amino-acid sequence, 414 residues long: Histidine--tRNA ligase (414 aa).

It belongs to the class-II aminoacyl-tRNA synthetase family. Homodimer.

Its subcellular location is the cytoplasm. The catalysed reaction is tRNA(His) + L-histidine + ATP = L-histidyl-tRNA(His) + AMP + diphosphate + H(+). This Mycoplasma mycoides subsp. mycoides SC (strain CCUG 32753 / NCTC 10114 / PG1) protein is Histidine--tRNA ligase.